We begin with the raw amino-acid sequence, 477 residues long: Erythritol/L-threitol-binding protein (477 aa).

The segment at residues 1 to 38 (MMSRESQPGLHRQLSRRNMLAAMGLAGAAAVSLPVLSA) is a signal peptide (tat-type signal).

The protein belongs to the bacterial solute-binding protein 1 family. Predicted to be exported by the Tat system. The position of the signal peptide cleavage has not been experimentally proven.

Part of an ABC transporter complex involved in erythritol/L-threitol import. Binds erythritol and L-threitol. Functions in the transport for the degradation pathways of erythritol and L-threitol, that allow M.smegmatis to grow on these compounds as the sole carbon source. The chain is Erythritol/L-threitol-binding protein from Mycolicibacterium smegmatis (strain ATCC 700084 / mc(2)155) (Mycobacterium smegmatis).